Consider the following 560-residue polypeptide: DNA ligase B (560 aa).

Lysine 124 (N6-AMP-lysine intermediate) is an active-site residue.

The protein belongs to the NAD-dependent DNA ligase family. LigB subfamily.

It catalyses the reaction NAD(+) + (deoxyribonucleotide)n-3'-hydroxyl + 5'-phospho-(deoxyribonucleotide)m = (deoxyribonucleotide)n+m + AMP + beta-nicotinamide D-nucleotide.. Catalyzes the formation of phosphodiester linkages between 5'-phosphoryl and 3'-hydroxyl groups in double-stranded DNA using NAD as a coenzyme and as the energy source for the reaction. The polypeptide is DNA ligase B (Escherichia coli O17:K52:H18 (strain UMN026 / ExPEC)).